Consider the following 170-residue polypeptide: Odorant-binding protein 2a (170 aa).

Residues 1 to 15 form the signal peptide; it reads MKTLFLGVTLGLAAA. A disulfide bridge connects residues cysteine 74 and cysteine 166.

The protein belongs to the calycin superfamily. Lipocalin family. As to quaternary structure, monomer. Strongly expressed in the nasal structures, salivary and lachrymal glands, and lung. Expressed in the liver.

It localises to the secreted. In terms of biological role, binds and transports small hydrophobic volatile molecules with a higher affinity for aldehydes and large fatty acids, including undecanal, palmitic acid, efficient aldehydes, benzenic aldehydes, heterocyclic aldehydes and aliphatic acids. In Homo sapiens (Human), this protein is Odorant-binding protein 2a (OBP2A).